A 251-amino-acid polypeptide reads, in one-letter code: tRNA (guanine-N(1)-)-methyltransferase (251 aa).

S-adenosyl-L-methionine-binding positions include Gly-117 and 137 to 142; that span reads IGDYVL.

The protein belongs to the RNA methyltransferase TrmD family. Homodimer.

It localises to the cytoplasm. It catalyses the reaction guanosine(37) in tRNA + S-adenosyl-L-methionine = N(1)-methylguanosine(37) in tRNA + S-adenosyl-L-homocysteine + H(+). Its function is as follows. Specifically methylates guanosine-37 in various tRNAs. This chain is tRNA (guanine-N(1)-)-methyltransferase, found in Haemophilus ducreyi (strain 35000HP / ATCC 700724).